The sequence spans 653 residues: uncharacterized protein (653 aa).

A run of 2 helical transmembrane segments spans residues 39-59 and 207-227; these read AMTTLMVSLLMSSLPSGLKLI and AVFVSIWLMVILGAAFNAFTI. The region spanning 225 to 277 is the HAMP domain; that stretch reads FTITKPIRELLTGVKNIASGDFHQRISLPFGGELGALIFNFNEMAERLEKYEQ. Residues 286–356 enclose the PAS domain; that stretch reads EKAKLETLVS…PALNDIVRKN (71 aa). The Histidine kinase domain occupies 421 to 651; the sequence is NVSHELRTPL…CFFFDLIIAK (231 aa). Residue histidine 424 is modified to Phosphohistidine; by autocatalysis.

Its subcellular location is the plastid. It localises to the chloroplast membrane. The catalysed reaction is ATP + protein L-histidine = ADP + protein N-phospho-L-histidine.. This is an uncharacterized protein from Pyropia yezoensis (Susabi-nori).